Reading from the N-terminus, the 289-residue chain is GTPase Era (289 aa).

One can recognise an Era-type G domain in the interval 2–167 (KSGFISLIGR…LDEIYKYLPE (166 aa)). The G1 stretch occupies residues 10–17 (GRTNAGKS). A GTP-binding site is contributed by 10–17 (GRTNAGKS). Positions 36 to 40 (NATRR) are G2. The segment at 57-60 (DTPG) is G3. GTP-binding positions include 57 to 61 (DTPGL) and 116 to 119 (TKID). A G4 region spans residues 116–119 (TKID). A G5 region spans residues 146-148 (LSV). Residues 198–274 (VSDEVPYSTD…FLKINVKIDK (77 aa)) form the KH type-2 domain.

This sequence belongs to the TRAFAC class TrmE-Era-EngA-EngB-Septin-like GTPase superfamily. Era GTPase family. Monomer.

The protein localises to the cytoplasm. Its subcellular location is the cell inner membrane. An essential GTPase that binds both GDP and GTP, with rapid nucleotide exchange. Plays a role in 16S rRNA processing and 30S ribosomal subunit biogenesis and possibly also in cell cycle regulation and energy metabolism. This chain is GTPase Era, found in Campylobacter fetus subsp. fetus (strain 82-40).